We begin with the raw amino-acid sequence, 748 residues long: Spidroin-1 (748 aa).

Repeat copies occupy residues 1 to 25, 26 to 38, 39 to 66, 67 to 96, 97 to 130, 131 to 158, 159 to 191, 192 to 204, 205 to 235, 236 to 262, 263 to 292, 293 to 305, 306 to 333, 334 to 360, 361 to 394, 395 to 424, 425 to 458, 459 to 485, 486 to 512, 513 to 525, 526 to 555, 556 to 582, 583 to 612, 613 to 642, and 643 to 655. The tract at residues 1–655 is 25 X approximate tandem repeats; sequence QGAGAAAAAA…ASAAASRLSS (655 aa).

This sequence belongs to the silk fibroin family. Major subunit, with spidroin 2, of the dragline silk.

Its subcellular location is the secreted. The protein localises to the extracellular space. Its function is as follows. Spiders' major ampullate silk possesses unique characteristics of strength and elasticity. Fibroin consists of pseudocrystalline regions of antiparallel beta-sheet interspersed with elastic amorphous segments. This chain is Spidroin-1, found in Trichonephila clavipes (Golden silk orbweaver).